A 152-amino-acid polypeptide reads, in one-letter code: UPF0178 protein Plav_1521 (152 aa).

The segment at 114-152 (LRETGQSKGGGPAFSKEDRSRFLRSLEDTVQAIRRRPPP) is disordered. Over residues 128-140 (SKEDRSRFLRSLE) the composition is skewed to basic and acidic residues.

The protein belongs to the UPF0178 family.

The chain is UPF0178 protein Plav_1521 from Parvibaculum lavamentivorans (strain DS-1 / DSM 13023 / NCIMB 13966).